The chain runs to 867 residues: Retinoblastoma-related protein 1 (867 aa).

Positions 275-476 (TPVTSAMTTA…EKGSSLYNSL (202 aa)) are domain A. The pocket; binds RPD3I and RBAP1 stretch occupies residues 275-722 (TPVTSAMTTA…NEVFVPAAKP (448 aa)). The spacer stretch occupies residues 477 to 594 (IVARPSVASE…PVGGNEKCAD (118 aa)). The segment at 512-563 (EGLPATPSKKRAAGPDDNADPRSPKRSCNESRNTVVERNLQTPPPKQSHMVS) is disordered. A compositionally biased stretch (basic and acidic residues) spans 530 to 540 (ADPRSPKRSCN). Residues 541–552 (ESRNTVVERNLQ) show a composition bias toward polar residues. The interval 595–722 (VTIHIFFSKI…NEVFVPAAKP (128 aa)) is domain B. Disordered regions lie at residues 734–762 (PEDKKNASGQIPGSPKPSPFPNLPDMSPK) and 843–867 (QINGGSTSDPAAAFSPLSKKRETDT).

This sequence belongs to the retinoblastoma protein (RB) family. In terms of assembly, interacts with RPD3I, RBAP1, the Arabidopsis cyclin CYCD3-1, the mastrevirus replication-associated protein A (RepA) and the begomovirus replication-associated protein (Rep). Ubiquitous.

The protein localises to the nucleus. Its function is as follows. Regulator of biological processes that recruits a histone deacetylase to control gene transcription. May play a role in the entry into mitosis, negatively regulating the cell proliferation. Formation of stable complexes with geminiviridae replication-associated proteins may create a cellular environment which favors viral DNA replication. The polypeptide is Retinoblastoma-related protein 1 (RBR1) (Zea mays (Maize)).